We begin with the raw amino-acid sequence, 264 residues long: Thiazole synthase (264 aa).

The active-site Schiff-base intermediate with DXP is the K98. 1-deoxy-D-xylulose 5-phosphate contacts are provided by residues G159, 185-186 (AG), and 207-208 (AT).

The protein belongs to the ThiG family. As to quaternary structure, homotetramer. Forms heterodimers with either ThiH or ThiS.

The protein localises to the cytoplasm. It catalyses the reaction [ThiS sulfur-carrier protein]-C-terminal-Gly-aminoethanethioate + 2-iminoacetate + 1-deoxy-D-xylulose 5-phosphate = [ThiS sulfur-carrier protein]-C-terminal Gly-Gly + 2-[(2R,5Z)-2-carboxy-4-methylthiazol-5(2H)-ylidene]ethyl phosphate + 2 H2O + H(+). It participates in cofactor biosynthesis; thiamine diphosphate biosynthesis. In terms of biological role, catalyzes the rearrangement of 1-deoxy-D-xylulose 5-phosphate (DXP) to produce the thiazole phosphate moiety of thiamine. Sulfur is provided by the thiocarboxylate moiety of the carrier protein ThiS. In vitro, sulfur can be provided by H(2)S. The chain is Thiazole synthase from Mycobacterium ulcerans (strain Agy99).